Consider the following 43-residue polypeptide: Protein PsbN (43 aa).

The helical transmembrane segment at 5-27 threads the bilayer; sequence TLVAIFISCSLVSFTGYALYTAF.

The protein belongs to the PsbN family.

It localises to the plastid. It is found in the chloroplast thylakoid membrane. Its function is as follows. May play a role in photosystem I and II biogenesis. This chain is Protein PsbN, found in Exsertotheca crispa (Moss).